The chain runs to 514 residues: Glutamyl-tRNA(Gln) amidotransferase subunit A (514 aa).

Active-site charge relay system residues include lysine 76 and serine 151. Serine 175 acts as the Acyl-ester intermediate in catalysis.

It belongs to the amidase family. GatA subfamily. In terms of assembly, heterotrimer of A, B and C subunits.

The catalysed reaction is L-glutamyl-tRNA(Gln) + L-glutamine + ATP + H2O = L-glutaminyl-tRNA(Gln) + L-glutamate + ADP + phosphate + H(+). In terms of biological role, allows the formation of correctly charged Gln-tRNA(Gln) through the transamidation of misacylated Glu-tRNA(Gln) in organisms which lack glutaminyl-tRNA synthetase. The reaction takes place in the presence of glutamine and ATP through an activated gamma-phospho-Glu-tRNA(Gln). In Salinibacter ruber (strain DSM 13855 / M31), this protein is Glutamyl-tRNA(Gln) amidotransferase subunit A.